Reading from the N-terminus, the 395-residue chain is Elongation factor Tu (395 aa).

The region spanning 10-205 (KPHVNIGTIG…CDTWIPLPPR (196 aa)) is the tr-type G domain. The segment at 19 to 26 (GHVDHGKT) is G1. 19–26 (GHVDHGKT) is a GTP binding site. Residue threonine 26 participates in Mg(2+) binding. Residues 60–64 (GITIN) are G2. Positions 81–84 (DCPG) are G3. GTP-binding positions include 81–85 (DCPGH) and 136–139 (NKCD). Residues 136–139 (NKCD) are G4. Positions 174–176 (SAL) are G5.

The protein belongs to the TRAFAC class translation factor GTPase superfamily. Classic translation factor GTPase family. EF-Tu/EF-1A subfamily. In terms of assembly, monomer.

Its subcellular location is the cytoplasm. The enzyme catalyses GTP + H2O = GDP + phosphate + H(+). GTP hydrolase that promotes the GTP-dependent binding of aminoacyl-tRNA to the A-site of ribosomes during protein biosynthesis. This chain is Elongation factor Tu, found in Parabacteroides distasonis (strain ATCC 8503 / DSM 20701 / CIP 104284 / JCM 5825 / NCTC 11152).